Consider the following 184-residue polypeptide: Probable DNA-directed RNA polymerase subunit delta (184 aa).

Positions 14–82 (KSFIDMAHTL…GENNWGLRDW (69 aa)) constitute an HTH HARE-type domain. Residues 114 to 184 (LLGEEEEEID…FNDDPDDDKI (71 aa)) are disordered. Residues 117–184 (EEEEEIDDQE…FNDDPDDDKI (68 aa)) are compositionally biased toward acidic residues.

Belongs to the RpoE family. RNAP is composed of a core of 2 alpha, a beta and a beta' subunits. The core is associated with a delta subunit and one of several sigma factors.

Functionally, participates in both the initiation and recycling phases of transcription. In the presence of the delta subunit, RNAP displays an increased specificity of transcription, a decreased affinity for nucleic acids, and an increased efficiency of RNA synthesis because of enhanced recycling. The chain is Probable DNA-directed RNA polymerase subunit delta from Staphylococcus carnosus (strain TM300).